We begin with the raw amino-acid sequence, 144 residues long: 3-dehydroquinate dehydratase (144 aa).

The active-site Proton acceptor is the Tyr22. 3 residues coordinate substrate: Asn73, His79, and Asp86. The active-site Proton donor is His99. Substrate is bound by residues 100 to 101 (IS) and Arg110.

It belongs to the type-II 3-dehydroquinase family. Homododecamer.

The catalysed reaction is 3-dehydroquinate = 3-dehydroshikimate + H2O. It participates in metabolic intermediate biosynthesis; chorismate biosynthesis; chorismate from D-erythrose 4-phosphate and phosphoenolpyruvate: step 3/7. In terms of biological role, catalyzes a trans-dehydration via an enolate intermediate. This chain is 3-dehydroquinate dehydratase, found in Clostridium acetobutylicum (strain ATCC 824 / DSM 792 / JCM 1419 / IAM 19013 / LMG 5710 / NBRC 13948 / NRRL B-527 / VKM B-1787 / 2291 / W).